The chain runs to 335 residues: Phosphate acyltransferase (335 aa).

This sequence belongs to the PlsX family. Homodimer. Probably interacts with PlsY.

Its subcellular location is the cytoplasm. It catalyses the reaction a fatty acyl-[ACP] + phosphate = an acyl phosphate + holo-[ACP]. Its pathway is lipid metabolism; phospholipid metabolism. Its function is as follows. Catalyzes the reversible formation of acyl-phosphate (acyl-PO(4)) from acyl-[acyl-carrier-protein] (acyl-ACP). This enzyme utilizes acyl-ACP as fatty acyl donor, but not acyl-CoA. This Alkaliphilus oremlandii (strain OhILAs) (Clostridium oremlandii (strain OhILAs)) protein is Phosphate acyltransferase.